The sequence spans 738 residues: Adhesion G protein-coupled receptor L4 (738 aa).

Residues 1–19 (MRLLLLLVGLSTLLNHSYT) form the signal peptide. The 37-residue stretch at 20-56 (QNCKTPCLPNAKCEVLDEVAACFCSTGYTGNGITICE) folds into the EGF-like 1 domain. Topologically, residues 20-480 (QNCKTPCLPN…DYNILTRITQ (461 aa)) are extracellular. 9 disulfides stabilise this stretch: cysteine 22–cysteine 32, cysteine 26–cysteine 41, cysteine 43–cysteine 55, cysteine 61–cysteine 73, cysteine 67–cysteine 82, cysteine 84–cysteine 105, cysteine 111–cysteine 123, cysteine 117–cysteine 132, and cysteine 134–cysteine 155. The region spanning 57–106 (DVDECNETSVCGDHAVCENTNGGFSCFCVEGYQTSTGKTQFTPNDGSYCQ) is the EGF-like 2; calcium-binding domain. An N-linked (GlcNAc...) asparagine glycan is attached at asparagine 62. The EGF-like 3; calcium-binding domain occupies 107 to 156 (DVDECNETSVCGDHAVCENTNGGFSCFCVEGYQTSTGKTQFTPNDGSYCQ). A glycan (N-linked (GlcNAc...) asparagine) is linked at asparagine 112. 6 N-linked (GlcNAc...) asparagine glycosylation sites follow: asparagine 175, asparagine 226, asparagine 297, asparagine 421, asparagine 429, and asparagine 443. Residues 292-467 (TQFDMNSTDL…AILMSPSTSI (176 aa)) form the GAIN-B domain. 2 disulfides stabilise this stretch: cysteine 417–cysteine 449 and cysteine 437–cysteine 451. The interval 417-467 (CAFWNYSVDDMNNGSWSSEGCELTYSNDTHTSCRCSHLTHFAILMSPSTSI) is GPS. The chain crosses the membrane as a helical span at residues 481–501 (LGIIISLICLAICIFTFWFFS). The Cytoplasmic segment spans residues 502-522 (EIQSTRTTIHKNLCCSLFLAQ). The helical transmembrane segment at 523 to 543 (LVFLVGININTNKLVCSIIAG) threads the bilayer. At 544-547 (LLHY) the chain is on the extracellular side. A helical transmembrane segment spans residues 548 to 568 (FFLAAFAWMCIEGIYLYLIVV). Residues 569 to 580 (GLIYNKGFLHKN) lie on the Cytoplasmic side of the membrane. The chain crosses the membrane as a helical span at residues 581 to 601 (FYIFGYLSPAVVVGFSASLGY). Topologically, residues 602-621 (RYYGTTKVCWLSTENNFIWS) are extracellular. Residues 622–642 (FIGPACLIILVNLLAFGVIIY) traverse the membrane as a helical segment. The Cytoplasmic segment spans residues 643-666 (KVFRHTAGLKPEVSCYENIRSCAR). A helical transmembrane segment spans residues 667-687 (GALALLFLLGTTWTFGVLHVV). Over 688 to 694 (HASVVTA) the chain is Extracellular. Residues 695–715 (YLFTVSNAFQGMFIFLFLCVL) traverse the membrane as a helical segment. Residues 716–738 (SRKIQEEYYRLFKNVPCCFECLR) are Cytoplasmic-facing.

Belongs to the G-protein coupled receptor 2 family. Adhesion G-protein coupled receptor (ADGR) subfamily. In terms of assembly, heterodimer of 2 chains generated by proteolytic processing; the large extracellular N-terminal fragment and the membrane-bound C-terminal fragment predominantly remain associated and non-covalently linked. In terms of processing, proteolytically cleaved into 2 subunits, an extracellular alpha subunit and a seven-transmembrane subunit. Glycosylated. Abundantly expressed in heart, lung, and kidney. Less evident expression is observed in brain, skeletal muscle, liver and spleen. No expression is detected in testis.

It localises to the cell membrane. Endothelial orphan receptor that acts as a key regulator of angiogenesis. The polypeptide is Adhesion G protein-coupled receptor L4 (Adgrl4) (Rattus norvegicus (Rat)).